Consider the following 117-residue polypeptide: Hydrogenase maturation factor HypA (117 aa).

His2 serves as a coordination point for Ni(2+). Residues Cys73, Cys76, Cys89, and Cys92 each contribute to the Zn(2+) site.

The protein belongs to the HypA/HybF family.

In terms of biological role, involved in the maturation of [NiFe] hydrogenases. Required for nickel insertion into the metal center of the hydrogenase. This Chlorobium luteolum (strain DSM 273 / BCRC 81028 / 2530) (Pelodictyon luteolum) protein is Hydrogenase maturation factor HypA.